We begin with the raw amino-acid sequence, 273 residues long: 2,3,4,5-tetrahydropyridine-2,6-dicarboxylate N-succinyltransferase (273 aa).

Residues arginine 104 and aspartate 141 each coordinate substrate.

This sequence belongs to the transferase hexapeptide repeat family. As to quaternary structure, homotrimer.

It localises to the cytoplasm. The enzyme catalyses (S)-2,3,4,5-tetrahydrodipicolinate + succinyl-CoA + H2O = (S)-2-succinylamino-6-oxoheptanedioate + CoA. It functions in the pathway amino-acid biosynthesis; L-lysine biosynthesis via DAP pathway; LL-2,6-diaminopimelate from (S)-tetrahydrodipicolinate (succinylase route): step 1/3. The chain is 2,3,4,5-tetrahydropyridine-2,6-dicarboxylate N-succinyltransferase from Acinetobacter baylyi (strain ATCC 33305 / BD413 / ADP1).